The following is a 190-amino-acid chain: MKYKEPFGVKLDFETGIIENAKKSVRRLSDMKGYFIDEEAWKKMVEEGDPVVYEVYAIEQEEKEGDLNFATTVLYPGKVGNEFFMTKGHYHSKIDRAEVYFALKGKGGMLLQTPEGEARFIEMEPGTIVYVPPYWAHRTINTGDKPFIFLALYPADAGHDYGTIAEKGFSKIVVEENGKVVVKDNPKWRM.

His89, His91, Glu98, and His137 together coordinate Fe cation.

It belongs to the archaeal-type GPI family. Homodimer. Fe cation serves as cofactor.

It localises to the cytoplasm. The enzyme catalyses alpha-D-glucose 6-phosphate = beta-D-fructose 6-phosphate. Its pathway is carbohydrate degradation; glycolysis; D-glyceraldehyde 3-phosphate and glycerone phosphate from D-glucose: step 2/4. Inhibited by mannose 6-phosphate, fructose 1-phosphate and fructose 1,6-bisphosphate. Its activity is also inhibited by Cobalt (II) ions &lt; EDTA &lt; nickel (II) ions &lt; zinc (II) ions &lt;&lt; cadmium (II) ions &lt; copper (II) ions. Sodium and potassium ions and manganese ions show little or no effect on activity. The sequence is that of Glucose-6-phosphate isomerase (pgiA) from Thermococcus litoralis.